The following is a 233-amino-acid chain: DREGAGKHIQAGAKKVLITAPGKGDIPTYVVGVNAELYSHEDTIISNASCTTNCLAPFVKVLDQKFGIIKGTMTTTHSYTGDQRLLDASHRDLRRARAAALNIVPTSTGAAKAVALVLPNLKGKLNGIALRVPTPNVSVVDLVVQVSKKTFAEEVNAAFRDAAEKELKGILDVCDEPLVSVDFRCSDVSSTIDSSLTMVMGDDMVKVIAWYDNEWGYSQRVVDLADIVANNWK.

Residues 49–51 (SCT), threonine 80, arginine 95, 108–109 (TG), and arginine 131 each bind D-glyceraldehyde 3-phosphate. The active-site Nucleophile is cysteine 50. Asparagine 213 serves as a coordination point for NADP(+).

Belongs to the glyceraldehyde-3-phosphate dehydrogenase family. In terms of assembly, tetramer of either four A chains (GAPDH 2) or two A and two B chains (GAPDH 1).

The protein localises to the plastid. It localises to the chloroplast. The catalysed reaction is D-glyceraldehyde 3-phosphate + phosphate + NADP(+) = (2R)-3-phospho-glyceroyl phosphate + NADPH + H(+). Its pathway is carbohydrate biosynthesis; Calvin cycle. This chain is Glyceraldehyde-3-phosphate dehydrogenase A, chloroplastic (GAPA), found in Sinapis alba (White mustard).